Consider the following 561-residue polypeptide: MKELLRDLITKELASCFADGSLSSGVFPSIVIEKPAHAEHGDFATNVAMLLAKAEKKAPRVVAEILVSRLQESADICSKLEVAGPGFINFYVKDEAWRQTLIAIDRACADYGKSRIGEGKKIQVEFVSANPTGPLHIGHGRGAAIGDTICRLLAAIGWDVTREFYYNDAGQQIANLALSVQARCLGIEPDDPRWPLDGYQGDYIRDVARSYLGQETVEADDQHVTAAGDPQDLDAIRRFAVAYLRREQDQDLTAFDVHFDVYSLESALYAEGRVEAVVQRLIDSGHTYEQDGALWLRTTTFGDDKDRVMRKADGGYTYFVPDVAYHLSKWERGFTRVINEQGADHHSTITRVRAGLQALNAGIPVGWPEYVLHQMVTVMRGGEEVKISKRAGSYVTLRDLIDEVGRDATRFFFVMRKPDSQLVFDIDLAKQQTLDNPVYYVQYAHARICSIFENALERGFVLPAAESVPLERLVTLEEMTIIKTLASFPEILEGSALNFEPHRVTYYLQELAGQFHSFYNRNRVITEDAELTAARLFLLKCVALTLKNALTVLGISAPEKM.

The 'HIGH' region motif lies at 129–139; that stretch reads ANPTGPLHIGH.

The protein belongs to the class-I aminoacyl-tRNA synthetase family. Monomer.

The protein localises to the cytoplasm. The enzyme catalyses tRNA(Arg) + L-arginine + ATP = L-arginyl-tRNA(Arg) + AMP + diphosphate. In Geotalea uraniireducens (strain Rf4) (Geobacter uraniireducens), this protein is Arginine--tRNA ligase.